Consider the following 245-residue polypeptide: 23S rRNA (guanosine-2'-O-)-methyltransferase RlmB (245 aa).

S-adenosyl-L-methionine is bound by residues Gly-197, Ile-217, and Leu-226.

Belongs to the class IV-like SAM-binding methyltransferase superfamily. RNA methyltransferase TrmH family. RlmB subfamily.

Its subcellular location is the cytoplasm. It catalyses the reaction guanosine(2251) in 23S rRNA + S-adenosyl-L-methionine = 2'-O-methylguanosine(2251) in 23S rRNA + S-adenosyl-L-homocysteine + H(+). Specifically methylates the ribose of guanosine 2251 in 23S rRNA. This chain is 23S rRNA (guanosine-2'-O-)-methyltransferase RlmB, found in Pasteurella multocida (strain Pm70).